The sequence spans 378 residues: Queuine tRNA-ribosyltransferase (378 aa).

Asp91 acts as the Proton acceptor in catalysis. Residues 91–95, Asp145, Gln189, and Gly216 each bind substrate; that span reads DSGGF. The segment at 247-253 is RNA binding; it reads GVGKPED. Asp266 serves as the catalytic Nucleophile. The tract at residues 271 to 275 is RNA binding; important for wobble base 34 recognition; sequence TRNAR. Zn(2+) is bound by residues Cys304, Cys306, Cys309, and His335.

Belongs to the queuine tRNA-ribosyltransferase family. As to quaternary structure, homodimer. Within each dimer, one monomer is responsible for RNA recognition and catalysis, while the other monomer binds to the replacement base PreQ1. Requires Zn(2+) as cofactor.

It catalyses the reaction 7-aminomethyl-7-carbaguanine + guanosine(34) in tRNA = 7-aminomethyl-7-carbaguanosine(34) in tRNA + guanine. It participates in tRNA modification; tRNA-queuosine biosynthesis. Catalyzes the base-exchange of a guanine (G) residue with the queuine precursor 7-aminomethyl-7-deazaguanine (PreQ1) at position 34 (anticodon wobble position) in tRNAs with GU(N) anticodons (tRNA-Asp, -Asn, -His and -Tyr). Catalysis occurs through a double-displacement mechanism. The nucleophile active site attacks the C1' of nucleotide 34 to detach the guanine base from the RNA, forming a covalent enzyme-RNA intermediate. The proton acceptor active site deprotonates the incoming PreQ1, allowing a nucleophilic attack on the C1' of the ribose to form the product. After dissociation, two additional enzymatic reactions on the tRNA convert PreQ1 to queuine (Q), resulting in the hypermodified nucleoside queuosine (7-(((4,5-cis-dihydroxy-2-cyclopenten-1-yl)amino)methyl)-7-deazaguanosine). The chain is Queuine tRNA-ribosyltransferase from Vibrio campbellii (strain ATCC BAA-1116).